The primary structure comprises 647 residues: 1-deoxy-D-xylulose-5-phosphate synthase (647 aa).

Thiamine diphosphate contacts are provided by residues His-79 and 120–122 (GHA). Mg(2+) is bound at residue Asp-152. Residues 153 to 154 (GS), Asn-181, Phe-293, and Glu-377 contribute to the thiamine diphosphate site. Residue Asn-181 coordinates Mg(2+).

The protein belongs to the transketolase family. DXPS subfamily. In terms of assembly, homodimer. Requires Mg(2+) as cofactor. It depends on thiamine diphosphate as a cofactor.

The enzyme catalyses D-glyceraldehyde 3-phosphate + pyruvate + H(+) = 1-deoxy-D-xylulose 5-phosphate + CO2. It participates in metabolic intermediate biosynthesis; 1-deoxy-D-xylulose 5-phosphate biosynthesis; 1-deoxy-D-xylulose 5-phosphate from D-glyceraldehyde 3-phosphate and pyruvate: step 1/1. In terms of biological role, catalyzes the acyloin condensation reaction between C atoms 2 and 3 of pyruvate and glyceraldehyde 3-phosphate to yield 1-deoxy-D-xylulose-5-phosphate (DXP). The polypeptide is 1-deoxy-D-xylulose-5-phosphate synthase (Bacteroides thetaiotaomicron (strain ATCC 29148 / DSM 2079 / JCM 5827 / CCUG 10774 / NCTC 10582 / VPI-5482 / E50)).